A 401-amino-acid chain; its full sequence is MAMSGTFHLTSDYVPGYTLSDSRCFFNSAVSRRTLAILPCSSCLDHKNGRLKSVPNRSSFVCRASSGGYRRNPDFSRLNKHGYRGNNRQSGGREDFDIENSDMLSSRNGPLFNLSSSPKFQATSSPGPREKEIVELFRKVQAQLRARAAAKKEEKKIEEASKGQGKESETVDSLLKLLRKHSGEQSKRQVSKFSSQGEVQGDTVDKQDRTGNLVTSGNKDNNASSFTRPTSSFRRKSPVPRSQSPPAYSSEATFDQSSSYSVTWTQKKDTVELHDEPEHEPAYEHEHEPENESEPGPVTTMLEPDSELKPESSSFYQEEEDDDVTFDVLSQDDGILDVLSDDDESLDDADEDSDEAEEEAVKDLSELKLVELRGIAKSRGLKGLSKMKKAELVELLGSDSS.

A chloroplast-targeting transit peptide spans 1 to 63; sequence MAMSGTFHLT…VPNRSSFVCR (63 aa). Disordered regions lie at residues 73-129 and 180-361; these read PDFS…PGPR and KHSG…EEAV. 3 stretches are compositionally biased toward polar residues: residues 102–126, 210–223, and 240–265; these read DMLS…TSSP, TGNL…DNNA, and PRSQ…VTWT. The segment covering 266-290 has biased composition (basic and acidic residues); the sequence is QKKDTVELHDEPEHEPAYEHEHEPE. Residues 339 to 358 are compositionally biased toward acidic residues; sequence LSDDDESLDDADEDSDEAEE. Residues 339–371 are a coiled coil; the sequence is LSDDDESLDDADEDSDEAEEEAVKDLSELKLVE.

As to quaternary structure, homodimer or homomultimer. Part of a chloroplastic degradosome-like complex. Interacts with RNE.

The protein resides in the plastid. Its subcellular location is the chloroplast. Binds to and supports processing of specific plastid RNAs. Associates via its C-terminal Rho-N domain to single stranded regions of 16S and 23S rRNAs or to rbcL mRNAs. May be involved in targeting transcripts to RNases such as RNE or RNase J. The protein is Rho-N domain-containing protein 1, chloroplastic (RHON1) of Arabidopsis thaliana (Mouse-ear cress).